An 814-amino-acid chain; its full sequence is S-layer protein sap (814 aa).

Positions 1–29 are cleaved as a signal peptide; it reads MAKTNSYKKVIAGTMTAAMVAGVVSPVAA. 3 SLH domains span residues 30 to 93, 94 to 150, and 152 to 214; these read AGKT…DAKP, SFAD…KVNG, and PATK…AAKV. The region spanning 403 to 479 is the BIG2 domain; that stretch reads FTSKDFKQNN…TVKDSKGKEL (77 aa).

Post-translationally, probably glycosylated.

It is found in the secreted. It localises to the cell wall. Its subcellular location is the S-layer. The S-layer is a paracrystalline mono-layered assembly of proteins which coat the surface of bacteria. This chain is S-layer protein sap (sap), found in Bacillus anthracis.